The following is a 380-amino-acid chain: Cytochrome b (380 aa).

4 helical membrane passes run 34 to 54, 78 to 99, 114 to 134, and 179 to 199; these read FGSL…LLAM, WLIR…YLHI, WNTG…GYVL, and FFAL…IHLT. Residues His-84 and His-98 each coordinate heme b. 2 residues coordinate heme b: His-183 and His-197. His-202 lines the a ubiquinone pocket. 4 helical membrane passes run 227-247, 289-309, 321-341, and 348-368; these read LKDL…ALFT, LGGV…PFLH, LSQL…WVGS, and FIII…VLLP.

The protein belongs to the cytochrome b family. As to quaternary structure, the cytochrome bc1 complex contains 11 subunits: 3 respiratory subunits (MT-CYB, CYC1 and UQCRFS1), 2 core proteins (UQCRC1 and UQCRC2) and 6 low-molecular weight proteins (UQCRH/QCR6, UQCRB/QCR7, UQCRQ/QCR8, UQCR10/QCR9, UQCR11/QCR10 and a cleavage product of UQCRFS1). This cytochrome bc1 complex then forms a dimer. Heme b is required as a cofactor.

The protein resides in the mitochondrion inner membrane. Its function is as follows. Component of the ubiquinol-cytochrome c reductase complex (complex III or cytochrome b-c1 complex) that is part of the mitochondrial respiratory chain. The b-c1 complex mediates electron transfer from ubiquinol to cytochrome c. Contributes to the generation of a proton gradient across the mitochondrial membrane that is then used for ATP synthesis. The chain is Cytochrome b (MT-CYB) from Herpetotheres cachinnans (Laughing falcon).